Consider the following 614-residue polypeptide: UvrABC system protein C (614 aa).

The GIY-YIG domain occupies 20 to 98 (TAPGVYRMYA…IKSLSPRYNV (79 aa)). Residues 207 to 242 (DELTRELGEQMQAASEALEFEQAARLRDLISSLRSM) enclose the UVR domain.

This sequence belongs to the UvrC family. In terms of assembly, interacts with UvrB in an incision complex.

It localises to the cytoplasm. Its function is as follows. The UvrABC repair system catalyzes the recognition and processing of DNA lesions. UvrC both incises the 5' and 3' sides of the lesion. The N-terminal half is responsible for the 3' incision and the C-terminal half is responsible for the 5' incision. The polypeptide is UvrABC system protein C (Stenotrophomonas maltophilia (strain R551-3)).